Here is a 299-residue protein sequence, read N- to C-terminus: tRNA dimethylallyltransferase (299 aa).

11-18 (GPTAVGKT) serves as a coordination point for ATP. Residue 13 to 18 (TAVGKT) participates in substrate binding. Residues 36–39 (DSQQ) form an interaction with substrate tRNA region.

It belongs to the IPP transferase family. As to quaternary structure, monomer. Mg(2+) serves as cofactor.

It catalyses the reaction adenosine(37) in tRNA + dimethylallyl diphosphate = N(6)-dimethylallyladenosine(37) in tRNA + diphosphate. Catalyzes the transfer of a dimethylallyl group onto the adenine at position 37 in tRNAs that read codons beginning with uridine, leading to the formation of N6-(dimethylallyl)adenosine (i(6)A). The polypeptide is tRNA dimethylallyltransferase (Streptococcus pyogenes serotype M49 (strain NZ131)).